Here is a 635-residue protein sequence, read N- to C-terminus: Chaperone protein HtpG (635 aa).

The tract at residues 1-343 is a; substrate-binding; it reads MTAEATVETR…SNDLSLNVSR (343 aa). The segment at 344-560 is b; that stretch reads EILQQDPNID…EHDMGAQMRR (217 aa). The interval 561–635 is c; it reads LLEAAGQAVP…LNKLLLELSN (75 aa).

The protein belongs to the heat shock protein 90 family. In terms of assembly, homodimer.

It localises to the cytoplasm. Its function is as follows. Molecular chaperone. Has ATPase activity. The polypeptide is Chaperone protein HtpG (Saccharophagus degradans (strain 2-40 / ATCC 43961 / DSM 17024)).